The primary structure comprises 124 residues: Large ribosomal subunit protein bL21 (124 aa).

The disordered stretch occupies residues 105–124; it reads NAPSIGPRVRKAKPAAEAAE.

Belongs to the bacterial ribosomal protein bL21 family. Part of the 50S ribosomal subunit. Contacts protein L20.

Its function is as follows. This protein binds to 23S rRNA in the presence of protein L20. The chain is Large ribosomal subunit protein bL21 from Rhodopseudomonas palustris (strain BisA53).